A 479-amino-acid polypeptide reads, in one-letter code: Aspartyl/glutamyl-tRNA(Asn/Gln) amidotransferase subunit B (479 aa).

Belongs to the GatB/GatE family. GatB subfamily. In terms of assembly, heterotrimer of A, B and C subunits.

It carries out the reaction L-glutamyl-tRNA(Gln) + L-glutamine + ATP + H2O = L-glutaminyl-tRNA(Gln) + L-glutamate + ADP + phosphate + H(+). It catalyses the reaction L-aspartyl-tRNA(Asn) + L-glutamine + ATP + H2O = L-asparaginyl-tRNA(Asn) + L-glutamate + ADP + phosphate + 2 H(+). Allows the formation of correctly charged Asn-tRNA(Asn) or Gln-tRNA(Gln) through the transamidation of misacylated Asp-tRNA(Asn) or Glu-tRNA(Gln) in organisms which lack either or both of asparaginyl-tRNA or glutaminyl-tRNA synthetases. The reaction takes place in the presence of glutamine and ATP through an activated phospho-Asp-tRNA(Asn) or phospho-Glu-tRNA(Gln). In Streptococcus pyogenes serotype M3 (strain ATCC BAA-595 / MGAS315), this protein is Aspartyl/glutamyl-tRNA(Asn/Gln) amidotransferase subunit B.